The primary structure comprises 685 residues: tRNA-dihydrouridine(47) synthase [NAD(P)(+)]-like (685 aa).

A compositionally biased stretch (low complexity) spans 1-12 (MAATAAAAAAAP). Disordered regions lie at residues 1–91 (MAAT…SSSH), 209–234 (AAND…PLCN), and 257–314 (LIDN…SCRT). The span at 13-29 (PADPPDSSPAASSPPRP) shows a compositional bias: pro residues. The segment at 87 to 118 (KSSSHLCIEVGKSGNVSSCKYGDSCRFSHDID) adopts a C3H1-type zinc-finger fold. Composition is skewed to basic and acidic residues over residues 209–221 (AAND…HDNL) and 273–284 (SKVESDEIDKHG). A compositionally biased stretch (polar residues) spans 287-314 (TLNTNTESEDPNLSNGLEPSNNSSSCRT). Residues 338 to 340 (PLT) and Q392 each bind FMN. Catalysis depends on C423, which acts as the Proton donor. Residues K462, H492, 525–527 (NGD), and 550–551 (AR) each bind FMN.

Belongs to the Dus family. Dus3 subfamily. Requires FMN as cofactor.

The catalysed reaction is 5,6-dihydrouridine(47) in tRNA + NAD(+) = uridine(47) in tRNA + NADH + H(+). It catalyses the reaction 5,6-dihydrouridine(47) in tRNA + NADP(+) = uridine(47) in tRNA + NADPH + H(+). The enzyme catalyses a 5,6-dihydrouridine in mRNA + NAD(+) = a uridine in mRNA + NADH + H(+). It carries out the reaction a 5,6-dihydrouridine in mRNA + NADP(+) = a uridine in mRNA + NADPH + H(+). Functionally, catalyzes the synthesis of dihydrouridine, a modified base found in the D-loop of most tRNAs. Specifically modifies U47 in cytoplasmic tRNAs. Catalyzes the synthesis of dihydrouridine in some mRNAs, thereby affecting their translation. In Oryza sativa subsp. japonica (Rice), this protein is tRNA-dihydrouridine(47) synthase [NAD(P)(+)]-like.